The chain runs to 106 residues: Large ribosomal subunit protein uL24 (106 aa).

It belongs to the universal ribosomal protein uL24 family. Part of the 50S ribosomal subunit.

Its function is as follows. One of two assembly initiator proteins, it binds directly to the 5'-end of the 23S rRNA, where it nucleates assembly of the 50S subunit. In terms of biological role, one of the proteins that surrounds the polypeptide exit tunnel on the outside of the subunit. This is Large ribosomal subunit protein uL24 from Desulforudis audaxviator (strain MP104C).